Reading from the N-terminus, the 517-residue chain is L-amino-acid oxidase (517 aa).

The signal sequence occupies residues 1–18 (MNVFFMFSLLFLAALESC). An intrachain disulfide couples cysteine 29 to cysteine 192. FAD contacts are provided by residues 62-63 (MA), 82-83 (EA), arginine 90, and 106-109 (GPMR). Residue arginine 109 coordinates substrate. The N-linked (GlcNAc...) asparagine glycan is linked to asparagine 191. Residue valine 280 participates in FAD binding. A disulfide bridge links cysteine 350 with cysteine 431. The N-linked (GlcNAc...) asparagine glycan is linked to asparagine 380. Tyrosine 391 serves as a coordination point for substrate. FAD contacts are provided by residues glutamate 476 and 483–488 (GWLDST). Position 483–484 (483–484 (GW)) interacts with substrate.

The protein belongs to the flavin monoamine oxidase family. FIG1 subfamily. As to quaternary structure, homodimer; non-covalently linked. Requires FAD as cofactor. N-glycosylated. Expressed by the venom gland.

Its subcellular location is the secreted. It catalyses the reaction an L-alpha-amino acid + O2 + H2O = a 2-oxocarboxylate + H2O2 + NH4(+). Functionally, catalyzes an oxidative deamination of predominantly hydrophobic and aromatic L-amino acids, thus producing hydrogen peroxide that may contribute to the diverse toxic effects of this enzyme. Exhibits diverse biological activities, such as hemorrhage, hemolysis, edema, apoptosis of vascular endothelial cells or tumor cell lines, antibacterial and antiparasitic activities, as well as regulation of platelet aggregation. Effects of snake L-amino oxidases on platelets are controversial, since they either induce aggregation or inhibit agonist-induced aggregation. These different effects are probably due to different experimental conditions. This chain is L-amino-acid oxidase, found in Notechis scutatus scutatus (Mainland tiger snake).